A 388-amino-acid polypeptide reads, in one-letter code: Acetate kinase (388 aa).

Mg(2+) is bound at residue Asn7. ATP is bound at residue Lys14. Arg76 is a substrate binding site. The active-site Proton donor/acceptor is Asp133. ATP contacts are provided by residues 193–197 (HLGNG), 267–269 (DMR), and 315–319 (GIGEN). Mg(2+) is bound at residue Glu374.

It belongs to the acetokinase family. As to quaternary structure, homodimer. Mg(2+) is required as a cofactor. Requires Mn(2+) as cofactor.

It localises to the cytoplasm. The catalysed reaction is acetate + ATP = acetyl phosphate + ADP. The protein operates within metabolic intermediate biosynthesis; acetyl-CoA biosynthesis; acetyl-CoA from acetate: step 1/2. Functionally, catalyzes the formation of acetyl phosphate from acetate and ATP. Can also catalyze the reverse reaction. The protein is Acetate kinase of Micrococcus luteus (strain ATCC 4698 / DSM 20030 / JCM 1464 / CCM 169 / CCUG 5858 / IAM 1056 / NBRC 3333 / NCIMB 9278 / NCTC 2665 / VKM Ac-2230) (Micrococcus lysodeikticus).